The sequence spans 218 residues: Probable 2-aminoethanethiol dioxygenase (218 aa).

Fe cation serves as cofactor.

It catalyses the reaction cysteamine + O2 = hypotaurine + H(+). This Dictyostelium discoideum (Social amoeba) protein is Probable 2-aminoethanethiol dioxygenase (ado-1).